The following is a 192-amino-acid chain: Thymidine kinase (192 aa).

Residues 9-16 and 87-90 contribute to the ATP site; these read SAMNAGKS and DECQ. The Proton acceptor role is filled by glutamate 88. Zn(2+) contacts are provided by cysteine 145, cysteine 147, cysteine 182, and histidine 185.

This sequence belongs to the thymidine kinase family. In terms of assembly, homotetramer.

The protein resides in the cytoplasm. It catalyses the reaction thymidine + ATP = dTMP + ADP + H(+). This is Thymidine kinase from Aliivibrio fischeri (strain ATCC 700601 / ES114) (Vibrio fischeri).